The chain runs to 456 residues: Enolase (456 aa).

Gln164 lines the (2R)-2-phosphoglycerate pocket. Glu207 serves as the catalytic Proton donor. Residues Asp244, Glu287, and Asp314 each contribute to the Mg(2+) site. (2R)-2-phosphoglycerate contacts are provided by Lys339, Arg368, Ser369, and Lys390. Lys339 functions as the Proton acceptor in the catalytic mechanism.

The protein belongs to the enolase family. As to quaternary structure, component of the RNA degradosome, a multiprotein complex involved in RNA processing and mRNA degradation. Requires Mg(2+) as cofactor.

Its subcellular location is the cytoplasm. The protein resides in the secreted. It localises to the cell surface. It carries out the reaction (2R)-2-phosphoglycerate = phosphoenolpyruvate + H2O. The protein operates within carbohydrate degradation; glycolysis; pyruvate from D-glyceraldehyde 3-phosphate: step 4/5. Catalyzes the reversible conversion of 2-phosphoglycerate (2-PG) into phosphoenolpyruvate (PEP). It is essential for the degradation of carbohydrates via glycolysis. The polypeptide is Enolase (Francisella tularensis subsp. tularensis (strain FSC 198)).